Here is a 305-residue protein sequence, read N- to C-terminus: Tyrosine recombinase XerC (305 aa).

Residues 4–95 (TSIQALINKW…AVKNFYRFLE (92 aa)) form the Core-binding (CB) domain. Residues 116–298 (LLPKALSEDD…SIKHLEAVYT (183 aa)) enclose the Tyr recombinase domain. Residues Arg159, Lys182, His250, Arg253, and His276 contribute to the active site. The active-site O-(3'-phospho-DNA)-tyrosine intermediate is the Tyr285.

This sequence belongs to the 'phage' integrase family. XerC subfamily. As to quaternary structure, forms a cyclic heterotetrameric complex composed of two molecules of XerC and two molecules of XerD.

The protein resides in the cytoplasm. Its function is as follows. Site-specific tyrosine recombinase, which acts by catalyzing the cutting and rejoining of the recombining DNA molecules. The XerC-XerD complex is essential to convert dimers of the bacterial chromosome into monomers to permit their segregation at cell division. It also contributes to the segregational stability of plasmids. In Rickettsia massiliae (strain Mtu5), this protein is Tyrosine recombinase XerC.